The chain runs to 319 residues: Alpha-hemolysin (319 aa).

Positions 1–26 (MKTRIVSSVTTTLLLGSILMNPVANA) are cleaved as a signal peptide.

This sequence belongs to the aerolysin family. As to quaternary structure, self-assembles to form first a non-lytic oligomeric intermediate and then, a mushroom-shaped homoheptamer structure of 100 Angstroms in length and up to 100 Angstroms in diameter.

It localises to the secreted. Alpha-toxin binds to the membrane of eukaryotic cells resulting in the release of low-molecular weight molecules and leading to an eventual osmotic lysis. Inhibits host neutrophil chemotaxis to the lesion region. Heptamer oligomerization and pore formation is required for lytic activity. The chain is Alpha-hemolysin (hly) from Staphylococcus aureus (strain NCTC 8325 / PS 47).